A 300-amino-acid polypeptide reads, in one-letter code: E3 ubiquitin-protein ligase RNF212B (300 aa).

Residues 6–40 (CNQCFRKDGAHFFVTSCGHIFCKKCVTLEKCAVCG) form an RING-type zinc finger. A coiled-coil region spans residues 87-124 (LLIAFYKHRITKLETAMQEAQQALVSQDKELSVLRKEN). The interval 141–232 (YQGSRSITPR…SYRTSSASSG (92 aa)) is disordered. Over residues 155–165 (TSPSQSVTPRP) the composition is skewed to polar residues. The segment covering 166 to 182 (SFQHSSQVVSRSSSAES) has biased composition (low complexity). The span at 191-200 (GSLGQGGRGL) shows a compositional bias: gly residues. The span at 211–232 (NETPSPASTHSLSYRTSSASSG) shows a compositional bias: polar residues.

Homodimer. In terms of processing, autoubiquitinated.

It is found in the chromosome. It carries out the reaction S-ubiquitinyl-[E2 ubiquitin-conjugating enzyme]-L-cysteine + [acceptor protein]-L-lysine = [E2 ubiquitin-conjugating enzyme]-L-cysteine + N(6)-ubiquitinyl-[acceptor protein]-L-lysine.. It functions in the pathway protein modification; protein ubiquitination. Its function is as follows. Ubiquitin E3 ligase that acts as a crucial factor for crossing-over (CO) formation during meiosis. Essential for normal prophase I progression and for ensuring appropriate CO designation in meiosis. Recruits key components of the cross-over machinery either directly ou indirectly, leading to the activation of the MutL-gamma complex. The function of RNF212B in CO designation is dependent on its catalytic activity. The sequence is that of E3 ubiquitin-protein ligase RNF212B (RNF212B) from Homo sapiens (Human).